We begin with the raw amino-acid sequence, 466 residues long: Asparagine--tRNA ligase (466 aa).

Belongs to the class-II aminoacyl-tRNA synthetase family. In terms of assembly, homodimer.

The protein resides in the cytoplasm. It catalyses the reaction tRNA(Asn) + L-asparagine + ATP = L-asparaginyl-tRNA(Asn) + AMP + diphosphate + H(+). The chain is Asparagine--tRNA ligase from Escherichia coli O139:H28 (strain E24377A / ETEC).